Here is a 342-residue protein sequence, read N- to C-terminus: ATPase asna-1 (342 aa).

ATP is bound at residue 26–33 (KGGVGKTT). D55 is an active-site residue. Residues E243 and N270 each coordinate ATP. Positions 285 and 288 each coordinate Zn(2+).

It belongs to the arsA ATPase family. Homodimer.

The protein localises to the cytoplasm. The protein resides in the endoplasmic reticulum. Functionally, ATPase required for the post-translational delivery of tail-anchored (TA) proteins to the endoplasmic reticulum. Recognizes and selectively binds the transmembrane domain of TA proteins in the cytosol. This complex then targets to the endoplasmic reticulum by membrane-bound receptors, where the tail-anchored protein is released for insertion. This process is regulated by ATP binding and hydrolysis. ATP binding drives the homodimer towards the closed dimer state, facilitating recognition of newly synthesized TA membrane proteins. ATP hydrolysis is required for insertion. Subsequently, the homodimer reverts towards the open dimer state, lowering its affinity for the membrane-bound receptor, and returning it to the cytosol to initiate a new round of targeting. May be involved in insulin signaling. The protein is ATPase asna-1 of Caenorhabditis elegans.